The following is an 826-amino-acid chain: Dolichyl-diphosphooligosaccharide--protein glycosyltransferase subunit STT3B (826 aa).

Residues 1–60 are disordered; the sequence is MAEPSAPESKHKSSLNSSPWSGLMALGNSRHGHHGPGAQCAHKAAGGAAPPKPAPAGLSG. An N-acetylalanine modification is found at Ala2. The Cytoplasmic portion of the chain corresponds to 2–41; sequence AEPSAPESKHKSSLNSSPWSGLMALGNSRHGHHGPGAQCA. Ser13, Ser18, and Ser29 each carry phosphoserine. A compositionally biased stretch (low complexity) spans 37 to 49; the sequence is GAQCAHKAAGGAA. A helical transmembrane segment spans residues 42–86; it reads HKAAGGAAPPKPAPAGLSGGLSQPAGWQSLLSFTILFLAWLAGFS. Topologically, residues 87 to 173 are lumenal; the sequence is SRLFAVIRFE…VHIRDVCVFL (87 aa). A DXD motif 1 motif is present at residues 101–103; sequence EFD. Asp103 provides a ligand contact to Mn(2+). The chain crosses the membrane as a helical span at residues 174-192; it reads APTFSGLTSISTFLLTREL. Over 193 to 194 the chain is Cytoplasmic; that stretch reads WN. Residues 195–212 traverse the membrane as a helical segment; sequence QGAGLLAACFIAIVPGYI. The Lumenal portion of the chain corresponds to 213–223; it reads SRSVAGSFDNE. Positions 221 and 223 each coordinate Mn(2+). The short motif at 221-223 is the DXD motif 2 element; it reads DNE. Residues 224–243 traverse the membrane as a helical segment; sequence GIAIFALQFTYYLWVKSVKT. The Cytoplasmic portion of the chain corresponds to 244 to 245; that stretch reads GS. A helical membrane pass occupies residues 246–260; that stretch reads VFWTMCCCLSYFYMV. Over 261-265 the chain is Lumenal; the sequence is SAWGG. A helical membrane pass occupies residues 266–282; the sequence is YVFIINLIPLHVFVLLL. Residues 283-287 lie on the Cytoplasmic side of the membrane; it reads MQRYS. Residues 288–313 form a helical membrane-spanning segment; that stretch reads KRVYIAYSTFYIVGLILSMQIPFVGF. Residues 314-321 lie on the Lumenal side of the membrane; it reads QPIRTSEH. Residues 322–341 form a helical membrane-spanning segment; that stretch reads MAAAGVFALLQAYAFLQYLR. At 342–350 the chain is on the cytoplasmic side; sequence DRLTKQEFQ. A helical transmembrane segment spans residues 351-371; it reads TLFFLGVSLAAGAVFLSVIYL. Topologically, residues 372-410 are lumenal; the sequence is TYTGYIAPWSGRFYSLWDTGYAKIHIPIIASVSEHQPTT. Residues 402–405 carry the SVSE motif motif; it reads SVSE. The helical transmembrane segment at 411–433 threads the bilayer; that stretch reads WVSFFFDLHILVCTFPAGLWFCI. Residues 434–439 lie on the Cytoplasmic side of the membrane; it reads KNINDE. The chain crosses the membrane as a helical span at residues 440–456; sequence RVFVALYAISAVYFAGV. The Lumenal segment spans residues 457–460; the sequence is MVRL. Arg459 serves as a coordination point for dolichyl diphosphooligosaccharide. A helical membrane pass occupies residues 461–482; it reads MLTLTPVVCMLSAIAFSNVFEH. Over 483–526 the chain is Cytoplasmic; sequence YLGDDMKRENPPVEDSSDEDDKRNQGNLYDKAGKVRKHATEQEK. The segment at 490–509 is disordered; the sequence is RENPPVEDSSDEDDKRNQGN. A phosphoserine mark is found at Ser498 and Ser499. The chain crosses the membrane as a helical span at residues 527–552; that stretch reads TEEGLGPNIKSIVTMLMLMLLMMFAV. Residues 553 to 826 are Lumenal-facing; sequence HCTWVTSNAY…KGKKISKKTV (274 aa). Residues 604–606 are interacts with target acceptor peptide in protein substrate; the sequence is WWD. Positions 604–608 match the WWDYG motif motif; it reads WWDYG. Tyr609 lines the dolichyl diphosphooligosaccharide pocket. N-linked (GlcNAc...) asparagine glycosylation is found at Asn616 and Asn623. The N-linked (GlcNAc...) (high mannose) asparagine glycan is linked to Asn627. N-linked (GlcNAc...) asparagine glycosylation occurs at Asn641. The short motif at 671-678 is the DK motif element; that stretch reads DINKFLWM.

Belongs to the STT3 family. In terms of assembly, component of the oligosaccharyltransferase (OST) complex. There are 2 OST complexes, OST-A and OST-B, which contain STT3A or STT3B as catalytic subunit, respectively. OST-A and OST-B contain common core subunits RPN1, RPN2, OST48, OST4, DAD1 and TMEM258, and OST-B contains either MAGT1 or TUSC3 as specific accessory subunit. It depends on Mg(2+) as a cofactor. Mn(2+) serves as cofactor. As to expression, expressed in heart, brain, placenta, lung, liver, muscle, kidney and pancreas. Expressed in skin fibroblasts (at protein level).

It is found in the endoplasmic reticulum. It localises to the endoplasmic reticulum membrane. It catalyses the reaction a di-trans,poly-cis-dolichyl diphosphooligosaccharide + L-asparaginyl-[protein] = N(4)-(oligosaccharide-(1-&gt;4)-N-acetyl-beta-D-glucosaminyl-(1-&gt;4)-N-acetyl-beta-D-glucosaminyl)-L-asparaginyl-[protein] + a di-trans,poly-cis-dolichyl diphosphate + H(+). It functions in the pathway protein modification; protein glycosylation. Its function is as follows. Catalytic subunit of the oligosaccharyl transferase (OST) complex that catalyzes the initial transfer of a defined glycan (Glc(3)Man(9)GlcNAc(2) in eukaryotes) from the lipid carrier dolichol-pyrophosphate to an asparagine residue within an Asn-X-Ser/Thr consensus motif in nascent polypeptide chains, the first step in protein N-glycosylation. N-glycosylation occurs cotranslationally and the complex associates with the Sec61 complex at the channel-forming translocon complex that mediates protein translocation across the endoplasmic reticulum (ER). All subunits are required for a maximal enzyme activity. This subunit contains the active site and the acceptor peptide and donor lipid-linked oligosaccharide (LLO) binding pockets. STT3B is present in a small subset of OST complexes (OST-B) and mediates both cotranslational and post-translational N-glycosylation of target proteins: STT3B-containing complexes are required for efficient post-translational glycosylation and while they are less competent than STT3A-containing complexes for cotranslational glycosylation, they have the ability to mediate glycosylation of some nascent sites that are not accessible for STT3A. STT3B-containing complexes also act post-translationally and mediate modification of skipped glycosylation sites in unfolded proteins. Plays a role in ER-associated degradation (ERAD) pathway that mediates ubiquitin-dependent degradation of misfolded endoplasmic reticulum proteins by mediating N-glycosylation of unfolded proteins, which are then recognized by the ERAD pathway and targeted for degradation. Mediates glycosylation of the disease variant AMYL-TTR 'Asp-38' of TTR at 'Asn-118', leading to its degradation. This Homo sapiens (Human) protein is Dolichyl-diphosphooligosaccharide--protein glycosyltransferase subunit STT3B.